The chain runs to 493 residues: Probable UTP--glucose-1-phosphate uridylyltransferase (493 aa).

UTP is bound by residues 105–108 (LTGK), glutamine 181, glycine 211, and aspartate 242. 107 to 108 (GK) is a substrate binding site. A substrate-binding site is contributed by 240 to 242 (NVD).

It belongs to the UDPGP type 1 family.

The enzyme catalyses alpha-D-glucose 1-phosphate + UTP + H(+) = UDP-alpha-D-glucose + diphosphate. Plays a central role as a glucosyl donor in cellular metabolic pathways. In Saccharomyces cerevisiae (strain ATCC 204508 / S288c) (Baker's yeast), this protein is Probable UTP--glucose-1-phosphate uridylyltransferase.